A 123-amino-acid chain; its full sequence is Large ribosomal subunit protein bL12 (123 aa).

The protein belongs to the bacterial ribosomal protein bL12 family. As to quaternary structure, homodimer. Part of the ribosomal stalk of the 50S ribosomal subunit. Forms a multimeric L10(L12)X complex, where L10 forms an elongated spine to which 2 to 4 L12 dimers bind in a sequential fashion. Binds GTP-bound translation factors.

In terms of biological role, forms part of the ribosomal stalk which helps the ribosome interact with GTP-bound translation factors. Is thus essential for accurate translation. The protein is Large ribosomal subunit protein bL12 of Haemophilus influenzae (strain 86-028NP).